The following is a 188-amino-acid chain: V-type proton ATPase subunit E (188 aa).

This sequence belongs to the V-ATPase E subunit family.

In terms of biological role, produces ATP from ADP in the presence of a proton gradient across the membrane. The sequence is that of V-type proton ATPase subunit E from Dictyoglomus thermophilum (strain ATCC 35947 / DSM 3960 / H-6-12).